Here is a 139-residue protein sequence, read N- to C-terminus: Nuclear transcription factor Y subunit B-4 (139 aa).

Residues 8-14 (LPIANVG) mediate DNA binding. The subunit association domain (SAD) stretch occupies residues 35 to 46 (VQECATEFISFV). Over residues 90–115 (YREAERERTEHNKGSNDSGNEKETNT) the composition is skewed to basic and acidic residues. The segment at 90–139 (YREAERERTEHNKGSNDSGNEKETNTRSDVQNQSTKFIRVVEKGSSSSAR) is disordered. The segment covering 116-125 (RSDVQNQSTK) has biased composition (polar residues).

Belongs to the NFYB/HAP3 subunit family. Heterotrimeric transcription factor composed of three components, NF-YA, NF-YB and NF-YC. NF-YB and NF-YC must interact and dimerize for NF-YA association and DNA binding. Expressed in flowers, siliques and young rosettes.

The protein localises to the nucleus. In terms of biological role, component of the NF-Y/HAP transcription factor complex. The NF-Y complex stimulates the transcription of various genes by recognizing and binding to a CCAAT motif in promoters. This Arabidopsis thaliana (Mouse-ear cress) protein is Nuclear transcription factor Y subunit B-4 (NFYB4).